The following is a 388-amino-acid chain: Non-structural maintenance of chromosome element 5 (388 aa).

In terms of assembly, component of the smc5/smc6 complex which consists of two subcomplexes, smc5-smc6-nse2 and nse1-nse2-nse4. Interacts with nse6 and rfp1.

It localises to the cytoplasm. The protein localises to the nucleus. The protein resides in the chromosome. In terms of biological role, acts in a DNA repair pathway for removal of UV-induced DNA damage that is distinct from classical nucleotide excision repair and in repair of ionizing radiation damage. Functions in homologous recombination repair of DNA double strand breaks and in recovery of stalled replication forks. May prevent formation of excessive Holliday junctions or assist in their resolution. The polypeptide is Non-structural maintenance of chromosome element 5 (nse5) (Schizosaccharomyces pombe (strain 972 / ATCC 24843) (Fission yeast)).